The sequence spans 185 residues: ATP synthase subunit delta (185 aa).

The protein belongs to the ATPase delta chain family. As to quaternary structure, F-type ATPases have 2 components, F(1) - the catalytic core - and F(0) - the membrane proton channel. F(1) has five subunits: alpha(3), beta(3), gamma(1), delta(1), epsilon(1). CF(0) has four main subunits: a(1), b(1), b'(1) and c(10-14). The alpha and beta chains form an alternating ring which encloses part of the gamma chain. F(1) is attached to F(0) by a central stalk formed by the gamma and epsilon chains, while a peripheral stalk is formed by the delta, b and b' chains.

The protein localises to the cellular thylakoid membrane. Its function is as follows. F(1)F(0) ATP synthase produces ATP from ADP in the presence of a proton or sodium gradient. F-type ATPases consist of two structural domains, F(1) containing the extramembraneous catalytic core and F(0) containing the membrane proton channel, linked together by a central stalk and a peripheral stalk. During catalysis, ATP synthesis in the catalytic domain of F(1) is coupled via a rotary mechanism of the central stalk subunits to proton translocation. This protein is part of the stalk that links CF(0) to CF(1). It either transmits conformational changes from CF(0) to CF(1) or is implicated in proton conduction. The sequence is that of ATP synthase subunit delta from Crocosphaera subtropica (strain ATCC 51142 / BH68) (Cyanothece sp. (strain ATCC 51142)).